The primary structure comprises 635 residues: Probable serine/threonine-protein kinase DDB_G0270146 (635 aa).

Residues valine 77–isoleucine 329 form the Protein kinase domain. ATP is bound by residues isoleucine 83–valine 91 and lysine 106. Aspartate 199 functions as the Proton acceptor in the catalytic mechanism. Residues serine 360 to aspartate 392 show a composition bias toward low complexity. The disordered stretch occupies residues serine 360–valine 405. Coiled-coil stretches lie at residues isoleucine 417 to glutamate 456 and lysine 536 to serine 585. Basic and acidic residues predominate over residues glutamate 540–lysine 582. Residues glutamate 540–glutamate 635 form a disordered region. Over residues aspartate 583–proline 598 the composition is skewed to low complexity. Residues glycine 626–glutamate 635 show a composition bias toward polar residues.

It belongs to the protein kinase superfamily. STE Ser/Thr protein kinase family. It depends on Mg(2+) as a cofactor.

The enzyme catalyses L-seryl-[protein] + ATP = O-phospho-L-seryl-[protein] + ADP + H(+). It carries out the reaction L-threonyl-[protein] + ATP = O-phospho-L-threonyl-[protein] + ADP + H(+). This chain is Probable serine/threonine-protein kinase DDB_G0270146, found in Dictyostelium discoideum (Social amoeba).